The primary structure comprises 244 residues: Protein crossbronx (244 aa).

The region spanning 20 to 176 (QQEYKILAEY…VLENIKESKE (157 aa)) is the UBC core domain.

It belongs to the ubiquitin-conjugating enzyme family. FTS subfamily.

This Drosophila persimilis (Fruit fly) protein is Protein crossbronx (cbx).